The chain runs to 210 residues: Thymidylate kinase (210 aa).

10 to 17 is a binding site for ATP; that stretch reads GPEGAGKS.

Belongs to the thymidylate kinase family.

The catalysed reaction is dTMP + ATP = dTDP + ADP. Phosphorylation of dTMP to form dTDP in both de novo and salvage pathways of dTTP synthesis. This is Thymidylate kinase from Pseudomonas fluorescens (strain SBW25).